A 1150-amino-acid chain; its full sequence is BAI1-associated protein 3 (1150 aa).

A disordered region spans residues 22-44 (RRKTEQEPEVTNSQEPPTGAWKP). The region spanning 139-298 (SSEEHMEAIM…VKSARANGTA (160 aa)) is the C2 1 domain. Ca(2+)-binding residues include Asp-174 and Asp-180. Residues 193-214 (APQEPSGQKEQRFGFRKGSKRS) are disordered. Positions 258 and 260 each coordinate Ca(2+). The MHD1 domain occupies 626-747 (FELYLTLADT…EASLFYTELL (122 aa)). An MHD2 domain is found at 851 to 959 (DEAVAPLLKY…CSTRECIEQF (109 aa)). One can recognise a C2 2 domain in the interval 973–1099 (RFGRLTVRCH…GIARPHVGGG (127 aa)). Residues Leu-1003, Asp-1004, Asp-1010, Asp-1068, Asp-1070, Ser-1073, and Asp-1076 each coordinate Ca(2+).

It belongs to the unc-13 family. In terms of assembly, interacts with ADGRB1, this interaction is direct. Interacts with endosomal SNARE proteins VAMP3, VAMP4, STX6 and STX16; this interaction is increased in the presence of calcium. Requires Ca(2+) as cofactor. As to expression, prominently expressed in brain structures including hypothalamus, amygdala, stria terminalis and periaqueductal gray (at protein level). Expressed in nonneuronal tissues, including placenta, lung, pancreas, spleen, and testes. Within placenta, expression is restricted to the syncytiotrophoblasts.

It is found in the cytoplasm. The protein resides in the cytosol. The protein localises to the recycling endosome membrane. It localises to the late endosome membrane. Its subcellular location is the golgi apparatus. It is found in the trans-Golgi network membrane. The protein resides in the cell membrane. In terms of biological role, functions in endosome to Golgi retrograde transport. In response to calcium influx, may interact with SNARE fusion receptors and membrane phospholipids to mediate endosome fusion with the trans-Golgi network. By promoting the recycling of secretory vesicle transmembrane proteins, it indirectly controls dense-core secretory vesicle biogenesis, maturation and their ability to mediate the constitutive and regulated secretion of neurotransmitters and hormones. May regulate behavior and food intake by controlling calcium-stimulated exocytosis of neurotransmitters including NPY and serotonin and hormones like insulin. Proposed to play a role in hypothalamic neuronal firing by modulating gamma-aminobutyric acid (GABA)ergic inhibitory neurotransmission. This is BAI1-associated protein 3 from Mus musculus (Mouse).